Consider the following 649-residue polypeptide: ATP-dependent DNA helicase Q1 (649 aa).

The 176-residue stretch at 100–275 folds into the Helicase ATP-binding domain; the sequence is INVTMAGKEV…QKILCIEKCF (176 aa). 113-120 lines the ATP pocket; that stretch reads MPTGGGKG. The DEVH box signature appears at 219 to 222; it reads DEVH. The Helicase C-terminal domain occupies 300 to 451; sequence FIEDIVKLIN…EMVSYCQNIS (152 aa). 4 residues coordinate Zn(2+): Cys453, Cys471, Cys475, and Cys478. An N6-acetyllysine mark is found at Lys514 and Lys522. A phosphoserine mark is found at Ser597 and Ser602. Positions 597–608 are enriched in polar residues; the sequence is SFRVESSQTCHS. The disordered stretch occupies residues 597-649; it reads SFRVESSQTCHSEQGDKKMEEKNSGNFQKKAANMLQQSGSKNTGAKKRKIDDA. A compositionally biased stretch (basic and acidic residues) spans 609 to 619; it reads EQGDKKMEEKN. Residues 630-639 are compositionally biased toward polar residues; the sequence is MLQQSGSKNT. At Ser634 the chain carries Phosphoserine. Residues 640–649 show a composition bias toward basic residues; that stretch reads GAKKRKIDDA.

The protein belongs to the helicase family. RecQ subfamily. May form homodimers or higher order oligomers. Interacts with EXO1. Interacts with MLH1. Interacts with PARP1. Requires Mg(2+) as cofactor. It depends on Mn(2+) as a cofactor. Zn(2+) serves as cofactor.

The protein resides in the nucleus. It catalyses the reaction Couples ATP hydrolysis with the unwinding of duplex DNA by translocating in the 3'-5' direction.. The catalysed reaction is ATP + H2O = ADP + phosphate + H(+). It carries out the reaction dATP + H2O = dADP + phosphate + H(+). In terms of biological role, DNA helicase that plays a role in DNA damage repair and genome stability. Exhibits a magnesium- and ATP-dependent DNA-helicase activity that unwinds single- and double-stranded DNA in a 3'-5' direction. Plays a role in restoring regressed replication forks. Required to restart stalled replication forks induced by abortive topoisomerase 1 and 2 lesions. May play a role in the repair of DNA that is damaged by ultraviolet light or other mutagens. The chain is ATP-dependent DNA helicase Q1 (RECQL) from Pongo abelii (Sumatran orangutan).